Reading from the N-terminus, the 1256-residue chain is Protein flightless-1 (1256 aa).

LRR repeat units lie at residues 4–28, 29–51, 52–74, 75–99, 100–122, 124–145, 147–169, 171–192, 218–241, 243–264, 265–287, 289–312, 313–335, 336–358, and 360–381; these read LPFV…MRQM, SRVQ…LGHL, QKLE…LTEL, SCLR…LFHL, EELT…LERA, NLIV…LFIH, TDLL…TRRL, NLKT…QLPS, LANL…VYNV, TLVR…VELW, QRLE…LCKL, KLRR…IGKL, GALE…LCRC, GALK…IHLL, and GLDQ…PSEA. The interval 405 to 476 is disordered; that stretch reads AAVPPSMPSS…ESLKPKRWDE (72 aa). Basic and acidic residues predominate over residues 431–476; it reads PRSEGDQDAAKVLKGMKDVAKDKDNEAGAVPEDGKPESLKPKRWDE. 4 Gelsolin-like repeats span residues 512–589, 633–703, 749–822, and 1168–1242; these read IEEV…EQFL, EPVA…AEFW, VELP…MQIF, and EKCA…SRRF.

Belongs to the villin/gelsolin family. As to expression, found in ovaries, larval fat bodies, brain and adult thorax.

Functionally, may play a key role in embryonic cellularization by interacting with both the cytoskeleton and other cellular components. Alternatively, it may play a structural role in indirect flight muscle. Vital for embryonic development. In Drosophila melanogaster (Fruit fly), this protein is Protein flightless-1 (fliI).